Reading from the N-terminus, the 344-residue chain is Sulfate/thiosulfate import ATP-binding protein CysA (344 aa).

An ABC transporter domain is found at 3 to 237; it reads IEVRNLVKKF…PATAFVHGFI (235 aa). 35-42 lines the ATP pocket; it reads GPSGSGKT.

The protein belongs to the ABC transporter superfamily. Sulfate/tungstate importer (TC 3.A.1.6) family. As to quaternary structure, the complex is composed of two ATP-binding proteins (CysA), two transmembrane proteins (CysT and CysW) and a solute-binding protein (CysP).

Its subcellular location is the cell inner membrane. The enzyme catalyses sulfate(out) + ATP + H2O = sulfate(in) + ADP + phosphate + H(+). It catalyses the reaction thiosulfate(out) + ATP + H2O = thiosulfate(in) + ADP + phosphate + H(+). Its function is as follows. Part of the ABC transporter complex CysAWTP involved in sulfate/thiosulfate import. Responsible for energy coupling to the transport system. This Bradyrhizobium diazoefficiens (strain JCM 10833 / BCRC 13528 / IAM 13628 / NBRC 14792 / USDA 110) protein is Sulfate/thiosulfate import ATP-binding protein CysA.